The sequence spans 346 residues: Annexin A1 (346 aa).

Residue Ala2 is modified to N-acetylalanine. Ser5 carries the post-translational modification Phosphoserine; by TRPM7. Gln19 participates in a covalent cross-link: Isoglutamyl lysine isopeptide (Gln-Lys) (interchain with K-?). Tyr21 carries the post-translational modification Phosphotyrosine; by EGFR. Phosphoserine occurs at positions 34 and 37. Position 41 is a phosphothreonine (Thr41). Annexin repeat units lie at residues 42–113 (FNPS…ALLK), 114–185 (TPAQ…SLAK), 197–269 (DLAD…VIVK), and 273–344 (SQPM…ALCG). Residue Lys58 is modified to N6-acetyllysine. Gly59, Val60, Glu62, Lys97, Leu100, Glu105, Met127, Gly129, Gly131, Thr132, and Glu134 together coordinate Ca(2+). Thr136 carries the phosphothreonine modification. Ca(2+) contacts are provided by Asp171, Gly210, and Arg213. Lys214 participates in a covalent cross-link: Glycyl lysine isopeptide (Lys-Gly) (interchain with G-Cter in SUMO1); alternate. Lys214 participates in a covalent cross-link: Glycyl lysine isopeptide (Lys-Gly) (interchain with G-Cter in SUMO2); alternate. Gly215 is a binding site for Ca(2+). An N6-acetyllysine modification is found at Lys239. Residues Asp253, Glu255, and Leu256 each contribute to the Ca(2+) site. A Glycyl lysine isopeptide (Lys-Gly) (interchain with G-Cter in SUMO1) cross-link involves residue Lys257. Positions 261, 286, 288, and 290 each coordinate Ca(2+). At Lys312 the chain carries N6-acetyllysine. Cys324 and Cys343 form a disulfide bridge. Residues Leu328, Glu330, and Thr331 each contribute to the Ca(2+) site. Residue Lys332 forms a Glycyl lysine isopeptide (Lys-Gly) (interchain with G-Cter in SUMO1) linkage. Residue Glu336 participates in Ca(2+) binding.

This sequence belongs to the annexin family. As to quaternary structure, homodimer; non-covalently linked. Homodimer; linked by transglutamylation. Homodimers linked by transglutamylation are observed in placenta, but not in other tissues. Interacts with S100A11. Heterotetramer, formed by two molecules each of S100A11 and ANXA1. Interacts with DYSF. Interacts with EGFR. In terms of processing, phosphorylated by protein kinase C, EGFR and TRPM7. Phosphorylated in response to EGF treatment. Post-translationally, sumoylated. Proteolytically cleaved by cathepsin CTSG to release the active N-terminal peptide Ac2-26. As to expression, detected on surface epithelia and mucosal glands in nasal cavity, trachea, bronchi and bronchioles. Detected in blood vessel endothelial cells. Detected in neutrophils (at protein level).

The protein localises to the nucleus. Its subcellular location is the cytoplasm. The protein resides in the cell projection. It localises to the cilium. It is found in the basolateral cell membrane. The protein localises to the lateral cell membrane. Its subcellular location is the cell membrane. The protein resides in the apical cell membrane. It localises to the membrane. It is found in the endosome membrane. The protein localises to the secreted. Its subcellular location is the extracellular space. The protein resides in the early endosome. It localises to the cytoplasmic vesicle membrane. It is found in the extracellular exosome. The protein localises to the cytoplasmic vesicle. Its subcellular location is the secretory vesicle lumen. The protein resides in the phagocytic cup. Its function is as follows. Plays important roles in the innate immune response as effector of glucocorticoid-mediated responses and regulator of the inflammatory process. Has anti-inflammatory activity. Plays a role in glucocorticoid-mediated down-regulation of the early phase of the inflammatory response. Contributes to the adaptive immune response by enhancing signaling cascades that are triggered by T-cell activation, regulates differentiation and proliferation of activated T-cells. Promotes the differentiation of T-cells into Th1 cells and negatively regulates differentiation into Th2 cells. Has no effect on unstimulated T-cells. Negatively regulates hormone exocytosis via activation of the formyl peptide receptors and reorganization of the actin cytoskeleton. Has high affinity for Ca(2+) and can bind up to eight Ca(2+) ions. Displays Ca(2+)-dependent binding to phospholipid membranes. Plays a role in the formation of phagocytic cups and phagosomes. Plays a role in phagocytosis by mediating the Ca(2+)-dependent interaction between phagosomes and the actin cytoskeleton. Functions at least in part by activating the formyl peptide receptors and downstream signaling cascades. Promotes chemotaxis of granulocytes and monocytes via activation of the formyl peptide receptors. Promotes rearrangement of the actin cytoskeleton, cell polarization and cell migration. Promotes resolution of inflammation and wound healing. Acts via neutrophil N-formyl peptide receptors to enhance the release of CXCL2. The protein is Annexin A1 (ANXA1) of Bos taurus (Bovine).